The sequence spans 383 residues: Lipid-A-disaccharide synthase (383 aa).

It belongs to the LpxB family.

The catalysed reaction is 2-N,3-O-bis[(3R)-3-hydroxytetradecanoyl]-alpha-D-glucosaminyl 1-phosphate + UDP-2-N,3-O-bis[(3R)-3-hydroxytetradecanoyl]-alpha-D-glucosamine = lipid A disaccharide (E. coli) + UDP + H(+). It carries out the reaction a lipid X + a UDP-2-N,3-O-bis[(3R)-3-hydroxyacyl]-alpha-D-glucosamine = a lipid A disaccharide + UDP + H(+). It functions in the pathway glycolipid biosynthesis; lipid IV(A) biosynthesis; lipid IV(A) from (3R)-3-hydroxytetradecanoyl-[acyl-carrier-protein] and UDP-N-acetyl-alpha-D-glucosamine: step 5/6. In terms of biological role, condensation of UDP-2,3-diacylglucosamine and 2,3-diacylglucosamine-1-phosphate to form lipid A disaccharide, a precursor of lipid A, a phosphorylated glycolipid that anchors the lipopolysaccharide to the outer membrane of the cell. The sequence is that of Lipid-A-disaccharide synthase from Pectobacterium carotovorum subsp. carotovorum (strain PC1).